The chain runs to 1036 residues: Potassium-transporting ATPase alpha chain 2 (1036 aa).

The tract at residues 1-50 (MRRKTEIYSVELNGTKDVKPADQRDDKKFKGAKNKDLEPNKSHEKEELKK) is disordered. Over 1 to 99 (MRRKTEIYSV…PNTLTPPKQT (99 aa)) the chain is Cytoplasmic. The segment covering 14-50 (GTKDVKPADQRDDKKFKGAKNKDLEPNKSHEKEELKK) has biased composition (basic and acidic residues). The chain crosses the membrane as a helical span at residues 100-120 (PEIIKFLKQMVGGFSILLWIG). At 121–143 (AALCWIAFVIQYVNNSASLDNVY) the chain is on the lumenal side. Residues 144–164 (LGAILVLVVILTGIFAYYQEA) form a helical membrane-spanning segment. The Cytoplasmic portion of the chain corresponds to 165 to 300 (KSTNIMASFS…SEKTPIAIEI (136 aa)). Residues 301 to 320 (EHFVHIVAGVAVSIDIIFFI) traverse the membrane as a helical segment. The Lumenal portion of the chain corresponds to 321–332 (TAVCMKYYVLDA). The chain crosses the membrane as a helical span at residues 333-350 (IIFLISIIVANVPEGLLA). The Cytoplasmic segment spans residues 351 to 784 (TVTVTLSLTA…EEGRLIFDNL (434 aa)). Aspartate 388 serves as the catalytic 4-aspartylphosphate intermediate. Positions 729 and 733 each coordinate Mg(2+). Residues 785–804 (KKTIAYTLTKNIAELCPFLI) form a helical membrane-spanning segment. The Lumenal portion of the chain corresponds to 805–814 (YIVAGLPLPI). Residues 815–835 (GTITILFIDLGTDIIPSIALA) traverse the membrane as a helical segment. Over 836-855 (YEKAESDIMNRKPRHKKKDR) the chain is Cytoplasmic. Residues 856 to 878 (LVNTQLAIYSYLHIGLMQALGGF) form a helical membrane-spanning segment. At 879-930 (LVYFTVYAQQGFWPTSLINLRVAWETDDINDLEDSYGQEWTRYQRKYLEWTG) the chain is on the lumenal side. Residues 931-950 (STAFFVAIMIQQIADLIIRK) traverse the membrane as a helical segment. The Cytoplasmic segment spans residues 951–964 (TRRNSIFQQGLFRN). Serine 955 is modified (phosphoserine; by PKA). A helical transmembrane segment spans residues 965-983 (KVIWVGIASQVIVALILSY). The Lumenal segment spans residues 984 to 998 (GLGSVPALSFTMLRV). Residues 999-1019 (QYWFVAVPHAILIWVYDEMRK) form a helical membrane-spanning segment. The Cytoplasmic segment spans residues 1020-1036 (LFIRLYPGSWWDKNMYY).

Belongs to the cation transport ATPase (P-type) (TC 3.A.3) family. Type IIC subfamily. In terms of assembly, the ATPase pump is composed of a catalytic alpha subunit and an auxiliary non-catalytic beta subunit. The alpha subunit pairs with the beta subunit of gastric H(+)/K(+) ATPase ATP4B or the beta subunit of Na(+)/K(+) ATPases ATP1B1 and ATP1B3; this interaction is required for the formation of a functionally active pump and its targeting at the plasma membrane. Expressed at high levels in distal colon, coagulating and preputial glands; at much lower levels in proximal colon, kidney, uterus, brain, placenta and lung; and at trace levels in heart and forestomach. Expressed in distal colon epithelium (at protein level). Expressed in anterior prostate (at protein level).

The protein resides in the apical cell membrane. It catalyses the reaction K(+)(out) + ATP + H2O + H(+)(in) = K(+)(in) + ADP + phosphate + 2 H(+)(out). It carries out the reaction K(+)(out) + Na(+)(in) + ATP + H2O = K(+)(in) + Na(+)(out) + ADP + phosphate + H(+). Up-regulated by K(+) ions in a dose-dependent way. In terms of biological role, the catalytic subunit of a H(+)/K(+) ATPase and/or Na(+)/K(+) ATPase pump which transports K(+) ions in exchange for Na(+) and/or H(+) ions across the apical membrane of epithelial cells. Uses ATP as an energy source to pump K(+) ions into the cell while transporting Na(+) and/or H(+) ions to the extracellular compartment. Involved in the maintenance of electrolyte homeostasis through K(+) ion absorption in kidney and colon. In the airway epithelium, may play a primary role in mucus acidification regulating its viscosity and clearance. The sequence is that of Potassium-transporting ATPase alpha chain 2 (Atp12a) from Rattus norvegicus (Rat).